Reading from the N-terminus, the 579-residue chain is Mitochondrial distribution and morphology protein 31 (579 aa).

The transit peptide at 1–47 (MSLFTRPFLRSPRQFSVARYVYWARSPALRSNLRIPSIAAASLRAYS) directs the protein to the mitochondrion. At 48–114 (NESKTGRDAP…SDDISAFISW (67 aa)) the chain is on the mitochondrial matrix side. A helical transmembrane segment spans residues 115–135 (ILVSNIFIFIFWTTTFVSLIL). Topologically, residues 136–558 (YLINTVFAQE…DEKRTLRLRR (423 aa)) are mitochondrial intermembrane. Residues 559–578 (VGFWSLQLILQVILMSLGAI) form a helical membrane-spanning segment. A topological domain (mitochondrial matrix) is located at residue Ala-579.

The protein belongs to the MDM31/MDM32 family. Interacts with MDM32. Participates in a complex of about 600 kDa.

The protein resides in the mitochondrion inner membrane. Involved in the organization of the mitochondrial membranes and the global structure of the mitochondria. Also required for mitochondrial distribution and mobility as well as for the maintenance of mitochondrial DNA nucleoids structures. The protein is Mitochondrial distribution and morphology protein 31 (MDM31) of Saccharomyces cerevisiae (strain ATCC 204508 / S288c) (Baker's yeast).